The primary structure comprises 108 residues: UPF0102 protein Sden_0272 (108 aa).

Belongs to the UPF0102 family.

This is UPF0102 protein Sden_0272 from Shewanella denitrificans (strain OS217 / ATCC BAA-1090 / DSM 15013).